We begin with the raw amino-acid sequence, 98 residues long: Co-chaperonin GroES (98 aa).

The protein belongs to the GroES chaperonin family. Heptamer of 7 subunits arranged in a ring. Interacts with the chaperonin GroEL.

The protein localises to the cytoplasm. Its function is as follows. Together with the chaperonin GroEL, plays an essential role in assisting protein folding. The GroEL-GroES system forms a nano-cage that allows encapsulation of the non-native substrate proteins and provides a physical environment optimized to promote and accelerate protein folding. GroES binds to the apical surface of the GroEL ring, thereby capping the opening of the GroEL channel. The polypeptide is Co-chaperonin GroES (Kineococcus radiotolerans (strain ATCC BAA-149 / DSM 14245 / SRS30216)).